The sequence spans 38 residues: MTTPNPNKQGAELSRTGLYWGLLLIFVLAVLFSSYFFN.

The helical transmembrane segment at 17–37 (GLYWGLLLIFVLAVLFSSYFF) threads the bilayer.

The protein belongs to the PsbL family. As to quaternary structure, PSII is composed of 1 copy each of membrane proteins PsbA, PsbB, PsbC, PsbD, PsbE, PsbF, PsbH, PsbI, PsbJ, PsbK, PsbL, PsbM, PsbT, PsbX, PsbY, PsbZ, Psb30/Ycf12, at least 3 peripheral proteins of the oxygen-evolving complex and a large number of cofactors. It forms dimeric complexes.

It is found in the plastid. The protein resides in the chloroplast thylakoid membrane. Its function is as follows. One of the components of the core complex of photosystem II (PSII). PSII is a light-driven water:plastoquinone oxidoreductase that uses light energy to abstract electrons from H(2)O, generating O(2) and a proton gradient subsequently used for ATP formation. It consists of a core antenna complex that captures photons, and an electron transfer chain that converts photonic excitation into a charge separation. This subunit is found at the monomer-monomer interface and is required for correct PSII assembly and/or dimerization. This chain is Photosystem II reaction center protein L, found in Staurastrum punctulatum (Green alga).